Here is a 469-residue protein sequence, read N- to C-terminus: Putative F-box/LRR-repeat protein At5g02930 (469 aa).

Residues 27–77 (VDSISDLPDAVLQHIFSYIPTELAIRTSVLSKRWRHVWSETPHLSFEWLKV) form the F-box domain. LRR repeat units follow at residues 30–58 (ISDL…VLSK), 178–203 (DCTM…SLKF), 204–214 (CMSLKYLNLSK), 223–250 (IERI…RLRD), 296–321 (TMLK…SLSK), and 341–366 (IIRS…TVYT).

The polypeptide is Putative F-box/LRR-repeat protein At5g02930 (Arabidopsis thaliana (Mouse-ear cress)).